A 401-amino-acid chain; its full sequence is CLIP domain-containing serine protease B9 (401 aa).

The first 26 residues, 1–26, serve as a signal peptide directing secretion; the sequence is MTSYNRSVAWLTVCVLLALHIGGSHQ. The Clip domain maps to 30–85; sequence QCTTPTRLRGRCISIYECDSILDYFKQRILTWEEREFLRKSQCTGATSGRQPFVCC. 3 disulfide bridges follow: Cys31-Cys84, Cys41-Cys72, and Cys47-Cys85. N-linked (GlcNAc...) asparagine glycosylation is present at Asn88. The Peptidase S1 domain maps to 148-400; it reads IYGGQNADID…YMAWVRSNIK (253 aa). Cys178 and Cys194 are oxidised to a cystine. Catalysis depends on charge relay system residues His193 and Asp257. Disulfide bonds link Cys322–Cys339 and Cys349–Cys376. Residue Asn330 is glycosylated (N-linked (GlcNAc...) asparagine). Ser353 functions as the Charge relay system in the catalytic mechanism.

It belongs to the peptidase S1 family. CLIP subfamily. In terms of assembly, forms a covalent heterodimer with SRPN2; the interaction inhibits CLIPB9 protease activity. In terms of processing, proteolytic cleavage is necessary for activation.

The protein localises to the secreted. Its activity is regulated as follows. Inhibited by serpin SRPN2. In terms of biological role, serine protease that functions in the melanization-mediated immune response. Cleaves and activates prophenoloxidase (PPO), which is required for the activation of the prophenoloxidase cascade probably following the recognition of pathogen-derived products. This Anopheles gambiae (African malaria mosquito) protein is CLIP domain-containing serine protease B9.